A 451-amino-acid chain; its full sequence is Uronate isomerase (451 aa).

It belongs to the metallo-dependent hydrolases superfamily. Uronate isomerase family.

The catalysed reaction is D-glucuronate = D-fructuronate. It carries out the reaction aldehydo-D-galacturonate = keto-D-tagaturonate. It participates in carbohydrate metabolism; pentose and glucuronate interconversion. The protein is Uronate isomerase of Thermotoga sp. (strain RQ2).